We begin with the raw amino-acid sequence, 1117 residues long: Zinc finger E-box-binding homeobox 1 (1117 aa).

Disordered stretches follow at residues 1–103 (MADG…QNHD) and 122–143 (APEE…NGTP). Residues 15–30 (PRRNNVTNYNTVVEAN) are compositionally biased toward low complexity. Phosphoserine is present on residues Ser31 and Ser33. A C2H2-type 1 zinc finger spans residues 150–173 (LTCPYCDRGYKRFTSLKEHIKYRH). Residues Lys166 and Lys175 each participate in a glycyl lysine isopeptide (Lys-Gly) (interchain with G-Cter in SUMO2) cross-link. 2 C2H2-type zinc fingers span residues 180–202 (FSCS…MTSH) and 220–242 (FKCT…LRIH). The segment at 248 to 272 (YECPNCKKRFSHSGSYSSHISSKKC) adopts a C2H2-type 4; atypical zinc-finger fold. Positions 278-307 (VNGRPRSGLKTSQCSSPSLSTSPGSPTRPQ) are disordered. Residue Lys287 forms a Glycyl lysine isopeptide (Lys-Gly) (interchain with G-Cter in SUMO2) linkage. Positions 288–304 (TSQCSSPSLSTSPGSPT) are enriched in low complexity. Phosphoserine occurs at positions 293 and 302. Residues Lys311 and Lys315 each participate in a glycyl lysine isopeptide (Lys-Gly) (interchain with G-Cter in SUMO2) cross-link. Lys327 participates in a covalent cross-link: Glycyl lysine isopeptide (Lys-Gly) (interchain with G-Cter in SUMO); alternate. Lys327 participates in a covalent cross-link: Glycyl lysine isopeptide (Lys-Gly) (interchain with G-Cter in SUMO2); alternate. Residues Lys419, Lys473, Lys484, Lys495, and Lys528 each participate in a glycyl lysine isopeptide (Lys-Gly) (interchain with G-Cter in SUMO2) cross-link. 3 disordered regions span residues 476-501 (IPAP…TDKS), 528-566 (KHYD…SQPP), and 613-687 (GQIP…SPLN). Positions 484–501 (KSEKLPEDLTVKSETDKS) are enriched in basic and acidic residues. The homeobox; atypical DNA-binding region spans 559-618 (DLSPSQPPLKNLLSLLKAYYALNAQPSTEELSKIADSVNLPLDGVKKWFEKMQAGQIPGQ). 4 positions are modified to phosphoserine: Ser657, Ser664, Ser671, and Ser678. Positions 673-687 (MNGSRSCTSSPSPLN) are enriched in polar residues. Thr680 is subject to Phosphothreonine. Ser682 bears the Phosphoserine mark. Residue Lys752 forms a Glycyl lysine isopeptide (Lys-Gly) (interchain with G-Cter in SUMO); alternate linkage. A Glycyl lysine isopeptide (Lys-Gly) (interchain with G-Cter in SUMO2); alternate cross-link involves residue Lys752. The disordered stretch occupies residues 834–876 (PPVKVIQPNGNQDERQDTSSEGVSTVEDQNDSDSTPPKKKTRK). Positions 852-868 (SSEGVSTVEDQNDSDST) are enriched in polar residues. 2 C2H2-type zinc fingers span residues 882–904 (YACD…KYEH) and 910–932 (HECG…MRLH). The C2H2-type 7; atypical zinc-finger motif lies at 938-959 (YQCDKCGKRFSHSGSYSQHMNH). Positions 991–1117 (EHVGARASPS…QLSEEKTNEA (127 aa)) are disordered. Composition is skewed to acidic residues over residues 1013-1032 (EEDE…MEEL), 1042-1069 (QGEE…DEAE), and 1098-1109 (SEMESESESEQL).

It belongs to the delta-EF1/ZFH-1 C2H2-type zinc-finger family. Interacts (via N-terminus) with SMARCA4/BRG1. In terms of processing, ubiquitinated, leading to degradation in a proteasome-dependent manner. Deubiquitinated by USP51, leading to stabilization. As to expression, expressed in the external germinal layer (EGL) and internal granular layer (IGL) of the cerebellum (at protein level).

It localises to the nucleus. Acts as a transcriptional repressor. Binds to E-box sequences in the immunoglobulin heavy chain enhancer as well as in the regulatory regions of many other tissue-specific genes. Represses E-cadherin promoter and induces an epithelial-mesenchymal transition (EMT) by recruiting SMARCA4/BRG1. Represses BCL6 transcription in the presence of the corepressor CTBP1. Positively regulates neuronal differentiation. Represses RCOR1 transcription activation during neurogenesis. Represses transcription by binding to the E box (5'-CANNTG-3'). In the absence of TGFB1, acts as a repressor of COL1A2 transcription via binding to the E-box in the upstream enhancer region. Promotes tumorigenicity by repressing stemness-inhibiting microRNAs. This is Zinc finger E-box-binding homeobox 1 from Mus musculus (Mouse).